We begin with the raw amino-acid sequence, 204 residues long: Holliday junction branch migration complex subunit RuvA (204 aa).

A domain I region spans residues 1–64; it reads MIGRLQGILL…EDAHLLFGFA (64 aa). The segment at 65 to 143 is domain II; it reads QKTDRTLFRE…GVKQSDFFVE (79 aa). Residues 144-155 are flexible linker; sequence STHIPLSPSIES. A domain III region spans residues 156 to 204; sequence HSESSSDEAISALIALGYKPVEAEKMVKRVAKPELTSEQVIREALKAAL.

Belongs to the RuvA family. As to quaternary structure, homotetramer. Forms an RuvA(8)-RuvB(12)-Holliday junction (HJ) complex. HJ DNA is sandwiched between 2 RuvA tetramers; dsDNA enters through RuvA and exits via RuvB. An RuvB hexamer assembles on each DNA strand where it exits the tetramer. Each RuvB hexamer is contacted by two RuvA subunits (via domain III) on 2 adjacent RuvB subunits; this complex drives branch migration. In the full resolvosome a probable DNA-RuvA(4)-RuvB(12)-RuvC(2) complex forms which resolves the HJ.

It localises to the cytoplasm. Its function is as follows. The RuvA-RuvB-RuvC complex processes Holliday junction (HJ) DNA during genetic recombination and DNA repair, while the RuvA-RuvB complex plays an important role in the rescue of blocked DNA replication forks via replication fork reversal (RFR). RuvA specifically binds to HJ cruciform DNA, conferring on it an open structure. The RuvB hexamer acts as an ATP-dependent pump, pulling dsDNA into and through the RuvAB complex. HJ branch migration allows RuvC to scan DNA until it finds its consensus sequence, where it cleaves and resolves the cruciform DNA. The chain is Holliday junction branch migration complex subunit RuvA from Haemophilus influenzae (strain PittEE).